The sequence spans 267 residues: 3-methyl-2-oxobutanoate hydroxymethyltransferase (267 aa).

Residues Asp-46 and Asp-85 each contribute to the Mg(2+) site. 3-methyl-2-oxobutanoate is bound by residues 46–47, Asp-85, and Lys-115; that span reads DS. Glu-117 is a Mg(2+) binding site. Glu-184 acts as the Proton acceptor in catalysis.

Belongs to the PanB family. As to quaternary structure, homodecamer; pentamer of dimers. It depends on Mg(2+) as a cofactor.

The protein localises to the cytoplasm. It carries out the reaction 3-methyl-2-oxobutanoate + (6R)-5,10-methylene-5,6,7,8-tetrahydrofolate + H2O = 2-dehydropantoate + (6S)-5,6,7,8-tetrahydrofolate. Its pathway is cofactor biosynthesis; (R)-pantothenate biosynthesis; (R)-pantoate from 3-methyl-2-oxobutanoate: step 1/2. In terms of biological role, catalyzes the reversible reaction in which hydroxymethyl group from 5,10-methylenetetrahydrofolate is transferred onto alpha-ketoisovalerate to form ketopantoate. The polypeptide is 3-methyl-2-oxobutanoate hydroxymethyltransferase (Geobacter sulfurreducens (strain ATCC 51573 / DSM 12127 / PCA)).